Reading from the N-terminus, the 431-residue chain is ABSCISIC ACID-INSENSITIVE 5-like protein 7 (431 aa).

Residues 1–29 (MGTHINFNNLGGGGHPGGEGSSNQMKPTG) form a disordered region. Positions 10–20 (LGGGGHPGGEG) are enriched in gly residues. Phosphoserine occurs at positions 39 and 61. Ser110 is modified (phosphoserine; by CPK32). The disordered stretch occupies residues 133 to 153 (DGNMEGSSGGGGESNVPPGRQ). Position 155 is a phosphothreonine (Thr155). Over residues 319–331 (SPGTSSAENNSLS) the composition is skewed to polar residues. The disordered stretch occupies residues 319-338 (SPGTSSAENNSLSPVPYVLN). The short motif at 340-347 (GRRSNTGL) is the Nuclear localization signal element. The bZIP domain maps to 351–414 (IERRQRRMIK…KNELKETSKR (64 aa)). The interval 353 to 372 (RRQRRMIKNRESAARSRARK) is basic motif. Residues 372-411 (KQAYTLELEAEIEKLKKTNQELQKKQAEMVEMQKNELKET) adopt a coiled-coil conformation. A leucine-zipper region spans residues 379 to 393 (LEAEIEKLKKTNQEL).

It belongs to the bZIP family. ABI5 subfamily. In terms of assembly, DNA-binding heterodimer. Interacts with CPK32 and the AFP proteins AFP1, AFP2 and AFP3. Interacts with FREE1 (via C-terminus). Post-translationally, phosphorylated by CPK4 and CPK11 in vitro. Expressed in roots, leaves, flowers and immatures siliques.

Its subcellular location is the nucleus. Functions as a transcriptional activator in the ABA-inducible expression of LTI65/RD29B (AC Q04980). Binds specifically to the ABA-responsive element (ABRE) of the LTI65/RD29B (AC Q04980) gene promoter. Binds to the promoter of FREE1 and activates its transcription. This Arabidopsis thaliana (Mouse-ear cress) protein is ABSCISIC ACID-INSENSITIVE 5-like protein 7.